The sequence spans 855 residues: DNA mismatch repair protein MutS (855 aa).

613–620 (GPNMGGKS) contributes to the ATP binding site. Residues 796–816 (TTSLPHEMPSQQSGKPASPMQ) form a disordered region.

The protein belongs to the DNA mismatch repair MutS family.

Functionally, this protein is involved in the repair of mismatches in DNA. It is possible that it carries out the mismatch recognition step. This protein has a weak ATPase activity. The polypeptide is DNA mismatch repair protein MutS (Pseudomonas aeruginosa (strain ATCC 15692 / DSM 22644 / CIP 104116 / JCM 14847 / LMG 12228 / 1C / PRS 101 / PAO1)).